Consider the following 111-residue polypeptide: Thiosulfate sulfurtransferase GlpE (111 aa).

A Rhodanese domain is found at 16-104; sequence QTENAVLLDV…WQRAGLPMET (89 aa). Residue Cys64 is the Cysteine persulfide intermediate of the active site.

The protein belongs to the GlpE family.

It is found in the cytoplasm. It carries out the reaction thiosulfate + hydrogen cyanide = thiocyanate + sulfite + 2 H(+). It catalyses the reaction thiosulfate + [thioredoxin]-dithiol = [thioredoxin]-disulfide + hydrogen sulfide + sulfite + 2 H(+). Its function is as follows. Transferase that catalyzes the transfer of sulfur from thiosulfate to thiophilic acceptors such as cyanide or dithiols. May function in a CysM-independent thiosulfate assimilation pathway by catalyzing the conversion of thiosulfate to sulfite, which can then be used for L-cysteine biosynthesis. This Actinobacillus succinogenes (strain ATCC 55618 / DSM 22257 / CCUG 43843 / 130Z) protein is Thiosulfate sulfurtransferase GlpE.